A 68-amino-acid chain; its full sequence is Beta-defensin 1 (68 aa).

Positions Met-1–Gly-21 are cleaved as a signal peptide. Residues Gly-22–Ser-32 constitute a propeptide that is removed on maturation. Intrachain disulfides connect Cys-37-Cys-66, Cys-44-Cys-59, and Cys-49-Cys-67.

It belongs to the beta-defensin family. In terms of assembly, monomer. Homodimer.

The protein localises to the secreted. It is found in the membrane. Its function is as follows. Has bactericidal activity. May act as a ligand for C-C chemokine receptor CCR6. Positively regulates the sperm motility and bactericidal activity in a CCR6-dependent manner. Binds to CCR6 and triggers Ca2+ mobilization in the sperm which is important for its motility. In Pongo pygmaeus (Bornean orangutan), this protein is Beta-defensin 1 (DEFB1).